We begin with the raw amino-acid sequence, 363 residues long: Trichocyst matrix protein T4-A (363 aa).

Positions 1–17 (MARSLTILAIVFAVATA) are cleaved as a signal peptide. Positions 18–52 (RVTKSESPKEILAQVNKDSFGNSILSVLQLQLATG) are excised as a propeptide. Residues 85-119 (VAFEKIIADLEQEIAYHQTQIVALSNLRDSTTEAL) adopt a coiled-coil conformation. Positions 190–221 (RFEKVQAKLMESKHALFKPLINALTQLASKVD) are excised as a propeptide. Positions 244 to 352 (ASLLATEERQ…EVLTQKLSAA (109 aa)) form a coiled coil.

Belongs to the TMP family. Two components are produced by post-translational processing from the precursor peptide.

Its subcellular location is the trichocyst. Structural protein that crystallize inside the trichocyst matrix. The sequence is that of Trichocyst matrix protein T4-A (T4A) from Paramecium tetraurelia.